We begin with the raw amino-acid sequence, 309 residues long: uncharacterized protein (309 aa).

6 helical membrane-spanning segments follow: residues 28–48 (IIAL…IMKP), 73–93 (MMLN…VIGW), 113–133 (LIVI…LLPI), 157–177 (ITAF…YFHS), 220–240 (FVVI…AALF), and 259–279 (IFAV…ILIL).

The protein localises to the cell membrane. This is an uncharacterized protein from Bacillus subtilis (strain 168).